The sequence spans 929 residues: ATP-dependent RNA helicase DDX42 (929 aa).

K5 carries the N6-acetyllysine modification. R12 is subject to Omega-N-methylarginine. Disordered stretches follow at residues 25–119 (KKEE…LEAF) and 182–203 (EYDS…LPPI). Positions 35–52 (SHSAFGAASSSSGFGKSA) are enriched in low complexity. At S58 the chain carries Phosphoserine. Acidic residues predominate over residues 70-84 (DEENAYFEDEEEDSS). A phosphoserine mark is found at S96, S104, S109, and S111. Positions 116-157 (LEAFMAEVEDQAARDMKRLEEKDKERKNVKGIRDDIEEEDDQ) form a coiled coil. S185 carries the post-translational modification Phosphoserine. The short motif at 253–281 (SSFAHFGFDEQLMHQIRKSEYTQPTPIQC) is the Q motif element. Residues 284–459 (VPVALSGRDM…RDILIDPIRV (176 aa)) enclose the Helicase ATP-binding domain. Residue 297–304 (AKTGSGKT) coordinates ATP. Positions 407 to 410 (DEAD) match the DEAD box motif. The Helicase C-terminal domain maps to 487-632 (WLTRRLVEFT…HVSKELLDLA (146 aa)). 2 disordered regions span residues 662–682 (ERPG…VMSN) and 723–929 (GTSS…RWDS). A compositionally biased stretch (low complexity) spans 723 to 737 (GTSSAGASGWTSAGS). Polar residues-rich tracts occupy residues 738–777 (LNSV…SSAP) and 787–798 (GVNNTASGNNSR). The tract at residues 739-828 (NSVPTNSAQQ…RHSHGDGGNR (90 aa)) is necessary for interaction with TP53BP2. The segment covering 821-911 (SHGDGGNRHG…KVDSKTDKTP (91 aa)) has biased composition (basic and acidic residues). K894 participates in a covalent cross-link: Glycyl lysine isopeptide (Lys-Gly) (interchain with G-Cter in SUMO2).

This sequence belongs to the DEAD box helicase family. DDX42 subfamily. As to quaternary structure, transient component of the SF3B subcomplex of the 17S U2 SnRNP complex. Interacts (via the C-terminus) with TP53BP2; the interaction is not inhibitied by TP53BP2 ubiquitination and is independent of p53/TP53.

It is found in the cytoplasm. Its subcellular location is the nucleus. It catalyses the reaction ATP + H2O = ADP + phosphate + H(+). Its function is as follows. ATP-dependent RNA helicase that binds to partially double-stranded RNAs (dsRNAs) in order to unwind RNA secondary structures. Unwinding is promoted in the presence of single-strand binding proteins. Also mediates RNA duplex formation thereby displacing the single-strand RNA binding protein. ATP and ADP modulate its activity: ATP binding and hydrolysis by DDX42 triggers RNA strand separation, whereas the ADP-bound form of the protein triggers annealing of complementary RNA strands. Required for assembly of the 17S U2 SnRNP complex of the spliceosome, a large ribonucleoprotein complex that removes introns from transcribed pre-mRNAs: DDX42 associates transiently with the SF3B subcomplex of the 17S U2 SnRNP complex and is released after fulfilling its role in the assembly of 17S U2 SnRNP. Involved in the survival of cells by interacting with TP53BP2 and thereby counteracting the apoptosis-stimulating activity of TP53BP2. Relocalizes TP53BP2 to the cytoplasm. This is ATP-dependent RNA helicase DDX42 (Ddx42) from Mus musculus (Mouse).